Consider the following 261-residue polypeptide: Aminoglycoside N(3)-acetyltransferase IV (261 aa).

It belongs to the antibiotic N-acetyltransferase family.

The catalysed reaction is a 2-deoxystreptamine antibiotic + acetyl-CoA = an N(3)-acetyl-2-deoxystreptamine antibiotic + CoA + H(+). Resistance to antibiotics containing the 2-deoxy-streptamine ring including gentamicin, kanamycin, tobramycin, neomycin and apramycin. This chain is Aminoglycoside N(3)-acetyltransferase IV (aacC4), found in Salmonella sp.